The sequence spans 815 residues: RNA-binding protein 5 (815 aa).

The tract at residues 1–93 (MGSDKRVSRT…EHDYRHDISD (93 aa)) is disordered. A phosphoserine mark is found at serine 18, serine 59, serine 69, serine 72, and serine 78. The RRM 1 domain occupies 98–178 (KTIMLRGLPI…KHIAMHYSNP (81 aa)). A RanBP2-type zinc finger spans residues 181–210 (KFEDWLCNKCCLNNFRKRLKCFRCGADKFD). The RRM 2 domain maps to 231-315 (DTIILRNIAP…KTIGVDFAKS (85 aa)). Residues 321-809 (VLPDGNRVSA…KDAVRKAMFA (489 aa)) form a required for interaction with U2AF2 region. Disordered regions lie at residues 385–468 (QAGG…DESS) and 508–539 (AAEA…TAQQ). The segment covering 393-410 (TSATSGTTVTTTSAAVVS) has biased composition (low complexity). Polar residues predominate over residues 411–422 (QSPQLYNQTSNP). A compositionally biased stretch (low complexity) spans 426–446 (PTEEAQPSTSTSTQAPAASPT). Serine 444 is subject to Phosphoserine. Residues 452–535 (TKYAVPDTST…KEKKEKPKSK (84 aa)) are sufficient for interaction with ACIN1, PRPF8, SFRS3, SNRPB, SNRPN, SNRNP70 and SNRNP200. Phosphoserine is present on residues serine 621 and serine 624. The C2H2-type zinc finger occupies 647–672 (MACLLCRRQFPNRDALVRHQQLSDLH). A G-patch domain is found at 743–789 (HSNIGNKMLQAMGWREGSGLGRKCQGITAPIEAQVRLKGAGLGAKGS).

It belongs to the RBM5/RBM10 family. In terms of assembly, component of the spliceosome A complex (also known as the prespliceosome). Appears to dissociate from the spliceosome upon formation of the spliceosome B complex (also known as the precatalytic spliceosome), in which the heterotrimeric U4/U6.U5 snRNPs are bound. Interacts with U2AF2; this interaction is direct. Also interacts with ACIN1, PRPF8, SFRS3, SNRPB, SNRPN, SNRNP70 and SNRNP200; these interactions may be indirect.

The protein localises to the nucleus. Its function is as follows. Component of the spliceosome A complex. Binds to ssRNA containing the consensus sequence 5'-AGGUAA-3'. Regulates alternative splicing of a number of mRNAs. May modulate splice site pairing after recruitment of the U1 and U2 snRNPs to the 5' and 3' splice sites of the intron. May both positively and negatively regulate apoptosis by regulating the alternative splicing of several genes involved in this process, including FAS and CASP2/caspase-2. In the case of FAS, promotes production of a soluble form of FAS that inhibits apoptosis. In the case of CASP2/caspase-2, promotes production of a catalytically active form of CASP2/Caspase-2 that induces apoptosis. In Mus musculus (Mouse), this protein is RNA-binding protein 5 (Rbm5).